Reading from the N-terminus, the 700-residue chain is Glycine--tRNA ligase beta subunit (700 aa).

Belongs to the class-II aminoacyl-tRNA synthetase family. As to quaternary structure, tetramer of two alpha and two beta subunits.

It is found in the cytoplasm. The enzyme catalyses tRNA(Gly) + glycine + ATP = glycyl-tRNA(Gly) + AMP + diphosphate. This is Glycine--tRNA ligase beta subunit from Helicobacter pylori (strain Shi470).